The primary structure comprises 753 residues: Catalase-peroxidase (753 aa).

The segment at residues 90 to 238 (WHSAGTYRVT…LASSHMGLIY (149 aa)) is a cross-link (tryptophyl-tyrosyl-methioninium (Trp-Tyr) (with M-264)). The active-site Proton acceptor is the H91. Residues 196–220 (SEGQEGHEGHGVVQGDESKKQHTDI) are disordered. The tryptophyl-tyrosyl-methioninium (Tyr-Met) (with W-90) cross-link spans 238–264 (YVNPEGPDGIPDPVASAKDIRVTFGRM). H279 provides a ligand contact to heme b.

This sequence belongs to the peroxidase family. Peroxidase/catalase subfamily. As to quaternary structure, homodimer or homotetramer. Heme b serves as cofactor. Formation of the three residue Trp-Tyr-Met cross-link is important for the catalase, but not the peroxidase activity of the enzyme.

It is found in the cytoplasm. It catalyses the reaction H2O2 + AH2 = A + 2 H2O. It carries out the reaction 2 H2O2 = O2 + 2 H2O. Its activity is regulated as follows. Inhibited by KCN. Its function is as follows. Bifunctional enzyme with both catalase and broad-spectrum peroxidase activity. The polypeptide is Catalase-peroxidase (Neurospora crassa (strain ATCC 24698 / 74-OR23-1A / CBS 708.71 / DSM 1257 / FGSC 987)).